A 219-amino-acid polypeptide reads, in one-letter code: Peroxiredoxin (219 aa).

The Thioredoxin domain occupies 2–164 (PLIGDDAPSF…IKRIVVALQK (163 aa)). Cys-44 serves as the catalytic Cysteine sulfenic acid (-SOH) intermediate. Arg-127 serves as a coordination point for substrate. The cysteines at positions 206 and 212 are disulfide-linked.

It belongs to the peroxiredoxin family. Prx6 subfamily. In terms of assembly, homodecamer. Pentamer of dimers that assemble into a ring structure.

It is found in the cytoplasm. It catalyses the reaction a hydroperoxide + [thioredoxin]-dithiol = an alcohol + [thioredoxin]-disulfide + H2O. Thiol-specific peroxidase that catalyzes the reduction of hydrogen peroxide and organic hydroperoxides to water and alcohols, respectively. Plays a role in cell protection against oxidative stress by detoxifying peroxides. This Methanosarcina mazei (strain ATCC BAA-159 / DSM 3647 / Goe1 / Go1 / JCM 11833 / OCM 88) (Methanosarcina frisia) protein is Peroxiredoxin.